Reading from the N-terminus, the 723-residue chain is 1,3-alpha-isomaltosidase (723 aa).

The active-site Nucleophile is the Asp451. Glu454 is a catalytic residue. Asp516 serves as the catalytic Proton donor. His581 is a binding site for substrate.

The protein belongs to the glycosyl hydrolase 31 family.

The protein localises to the cytoplasm. It carries out the reaction cyclobis-(1-&gt;3)-alpha-D-isomaltosyl + 2 H2O = 2 isomaltose. Involved in the intracellular degradation of the cyclic tetrasaccharide cyclobis-(1-6)-alpha-nigerosyl (CNN) formed extracellularly from starch. Catalyzes the hydrolysis of the alpha-1,3-glucosidic linkage of cyclobis-(1-6)-alpha-nigerosyl (CNN) to yield isomaltose via a possible linear tetrasaccharide. It has a strong preference for the alpha-(1-3)-isomaltosyl moiety. The sequence is that of 1,3-alpha-isomaltosidase from Kribbella flavida (strain DSM 17836 / JCM 10339 / NBRC 14399).